A 131-amino-acid chain; its full sequence is Biogenesis of lysosome-related organelles complex 1 subunit CNL1 (131 aa).

The segment at 1-29 is disordered; the sequence is MSAPDSNSGHAHDSAQNEGAAEGTRDPFG. A coiled-coil region spans residues 73-101; sequence DAIDINIEEMRRILQKCEELETHFDMLDQ.

It belongs to the BLOC1S4 family. As to quaternary structure, component of the biogenesis of lysosome-related organelles complex-1 (BLOC-1).

Its subcellular location is the cytoplasm. Its function is as follows. Component of the biogenesis of lysosome-related organelles complex-1 (BLOC-1), a complex that is involved in endosomal cargo sorting. This Lachancea thermotolerans (strain ATCC 56472 / CBS 6340 / NRRL Y-8284) (Yeast) protein is Biogenesis of lysosome-related organelles complex 1 subunit CNL1 (CLN1).